The sequence spans 727 residues: Endothelin-converting enzyme homolog (727 aa).

The Cytoplasmic portion of the chain corresponds to 1–44 (MSFNFSRYSGAYTTTFSFLLLALLIVSAVLLSRPYAPALLHAEE). The helical; Signal-anchor for type II membrane protein transmembrane segment at 45-65 (AYCVSMSCVTAAASVLSLMDA) threads the bilayer. In terms of domain architecture, Peptidase M13 spans 46 to 727 (YCVSMSCVTA…MNPVHKCEVW (682 aa)). 5 disulfide bridges follow: cysteine 47/cysteine 52, cysteine 70/cysteine 712, cysteine 78/cysteine 672, cysteine 134/cysteine 392, and cysteine 601/cysteine 724. Residues 66–727 (TADPCSDFYQ…MNPVHKCEVW (662 aa)) lie on the Extracellular side of the membrane. N-linked (GlcNAc...) asparagine glycans are attached at residues asparagine 138, asparagine 160, asparagine 164, asparagine 169, asparagine 222, asparagine 309, asparagine 337, asparagine 340, and asparagine 511. Histidine 564 is a binding site for Zn(2+). Glutamate 565 is an active-site residue. Residue histidine 568 coordinates Zn(2+). N-linked (GlcNAc...) asparagine glycosylation is found at asparagine 589 and asparagine 608. Zn(2+) is bound at residue glutamate 624. The Proton donor role is filled by aspartate 628. N-linked (GlcNAc...) asparagine glycosylation occurs at asparagine 656.

This sequence belongs to the peptidase M13 family. It depends on Zn(2+) as a cofactor. Highly expressed in brain and midgut, and to a lesser extent in fat body, ovaries, testes and haemocytes.

It is found in the cell membrane. This chain is Endothelin-converting enzyme homolog, found in Locusta migratoria (Migratory locust).